A 261-amino-acid polypeptide reads, in one-letter code: tRNA pseudouridine synthase A (261 aa).

Asp51 acts as the Nucleophile in catalysis. Substrate is bound at residue Tyr109.

This sequence belongs to the tRNA pseudouridine synthase TruA family. Homodimer.

The enzyme catalyses uridine(38/39/40) in tRNA = pseudouridine(38/39/40) in tRNA. Functionally, formation of pseudouridine at positions 38, 39 and 40 in the anticodon stem and loop of transfer RNAs. The polypeptide is tRNA pseudouridine synthase A (Shewanella piezotolerans (strain WP3 / JCM 13877)).